An 805-amino-acid polypeptide reads, in one-letter code: MAYDHKAIEKKWQRYWKQHKTFKATLDKDQKKYYALDMFPYPSGQGLHVGHPEGYTATDVMSRLKRMQGFNVLHPMGWDAFGLPAEQYALKTGHNPADFTNQNVDHFRDQIQSLGFSYDWDREVNTTDPNYYKWTQWIFEQLYKKGLAYEDEIMVNWAPDFMGGTVVANEEVVDGKTERGGYPVYRVPMRQWVLKITAYADRLIDDLDLVDWPESVKEMQRNWIGRSEGASVKFKVVGHDGVEIEVFTTRADTLFGASYVVLAPENELVDQLTTPEQKAAVDAYKEEVSRRSDLERTELSKEKTGVFTGAYVINPVNGEQLPIWTADYVLNSYGTGAVMAVPSGDQRDFEFATKFNLPITPVVEGFNGEEAYTEDGAHVNSGFLDGLNIKEAKAKMVEWLEEHDCGGKKVNYRLRDWIFSRQRYWGEPIPVIHWDDGTTSLVPEDELPLRLPETDNIEPSGTGESPLANIEDWVNVYDENGRHGKRETNTMPQWAGSSWYWLRYTDPTNDKEFASKEALDYWSPVDLYVGGAEHAVLHLLYARFWHKVLYDLGLVPTKEPFMKLVNQGMILGSNHEKMSKSKGNVVNPDDIVDQYGADTLRLYEMFMGPLEESVPWDEKGLHGSNKWVQRVWRLLMDDNNHLRDRVSTYNDGKLTKVYNQTVKKVTDDFERMHFNTAISQLMVFVNEAYKVDDLPLEYMKGFVKMIAPLMPHLAEELWSQFNESETITYQPWPTYDEKALVEDEVEMIVQVNGKVRAKIKMAKDADNKDVEDAALANEHVHSFVDGKDVKKVIVIPNRIVNIVVK.

A 'HIGH' region motif is present at residues 40 to 51 (PYPSGQGLHVGH). Residues 577–581 (KMSKS) carry the 'KMSKS' region motif. K580 lines the ATP pocket.

Belongs to the class-I aminoacyl-tRNA synthetase family.

It localises to the cytoplasm. The enzyme catalyses tRNA(Leu) + L-leucine + ATP = L-leucyl-tRNA(Leu) + AMP + diphosphate. This is Leucine--tRNA ligase from Limosilactobacillus fermentum (strain NBRC 3956 / LMG 18251) (Lactobacillus fermentum).